Reading from the N-terminus, the 167-residue chain is Endoribonuclease YbeY (167 aa).

3 residues coordinate Zn(2+): histidine 131, histidine 135, and histidine 141.

It belongs to the endoribonuclease YbeY family. Zn(2+) is required as a cofactor.

It localises to the cytoplasm. In terms of biological role, single strand-specific metallo-endoribonuclease involved in late-stage 70S ribosome quality control and in maturation of the 3' terminus of the 16S rRNA. The protein is Endoribonuclease YbeY of Rickettsia rickettsii (strain Sheila Smith).